The chain runs to 121 residues: uncharacterized protein (121 aa).

Disordered stretches follow at residues 1-28 (MGCA…QNGD) and 60-82 (QENL…VPGL). Ser-95 and Ser-115 each carry phosphoserine.

As to expression, expressed in spleen, prostate, testis and uterus.

This is an uncharacterized protein from Homo sapiens (Human).